The sequence spans 411 residues: Creatinase (411 aa).

His-240 is a catalytic residue.

This sequence belongs to the peptidase M24 family. Creatinase subfamily. Homodimer.

It carries out the reaction creatine + H2O = sarcosine + urea. The protein is Creatinase of Bacillus sp. (strain B-0618).